We begin with the raw amino-acid sequence, 178 residues long: Ribonuclease M5 (178 aa).

In terms of domain architecture, Toprim spans 4-100 (NEFIVVEGRD…KIGVEHADLI (97 aa)). 3 residues coordinate Mg(2+): glutamate 10, aspartate 56, and aspartate 58.

The protein belongs to the ribonuclease M5 family. The cofactor is Mg(2+).

The protein localises to the cytoplasm. It catalyses the reaction Endonucleolytic cleavage of RNA, removing 21 and 42 nucleotides, respectively, from the 5'- and 3'-termini of a 5S-rRNA precursor.. Its function is as follows. Required for correct processing of both the 5' and 3' ends of 5S rRNA precursor. Cleaves both sides of a double-stranded region yielding mature 5S rRNA in one step. This chain is Ribonuclease M5, found in Staphylococcus aureus (strain NCTC 8325 / PS 47).